The primary structure comprises 275 residues: Adaptin ear-binding coat-associated protein 1 (275 aa).

Residues 168–275 are disordered; sequence AKKGGASKPR…APQPSNWVQF (108 aa). Pro residues predominate over residues 187 to 201; the sequence is LPPPPGGKVTIPPPS. Thr-211 carries the post-translational modification Phosphothreonine. Residues 233–248 show a composition bias toward low complexity; it reads SPAPVSTSAPAPVSTS. Short sequence motifs (WXXF motif) lie at residues 252–255 and 272–275; these read WGDF and WVQF. A compositionally biased stretch (polar residues) spans 256 to 275; the sequence is STASSSVPNQAPQPSNWVQF.

It belongs to the NECAP family. Interacts with AP1G1 and AP2A1 components of the adapter protein complexes AP-1 and AP-2. Interacts with the GAE domain proteins GGA1, GGA2 and GGA3. In terms of tissue distribution, expressed primarily in brain (at protein level).

It localises to the cytoplasmic vesicle. Its subcellular location is the clathrin-coated vesicle membrane. The protein localises to the cell membrane. Functionally, involved in endocytosis. The sequence is that of Adaptin ear-binding coat-associated protein 1 (Necap1) from Mus musculus (Mouse).